The chain runs to 207 residues: CASP-like protein F16 (207 aa).

The segment at methionine 1 to glutamate 30 is disordered. At methionine 1 to threonine 37 the chain is on the cytoplasmic side. Residues alanine 38 to leucine 58 form a helical membrane-spanning segment. At lysine 59–tyrosine 79 the chain is on the extracellular side. A helical membrane pass occupies residues leucine 80 to valine 100. Over proline 101–arginine 108 the chain is Cytoplasmic. The helical transmembrane segment at alanine 109–valine 129 threads the bilayer. Topologically, residues serine 130–lysine 159 are extracellular. Residues alanine 160 to valine 180 form a helical membrane-spanning segment. Residues serine 181 to glycine 207 lie on the Cytoplasmic side of the membrane.

It belongs to the Casparian strip membrane proteins (CASP) family. As to quaternary structure, homodimer and heterodimers.

It is found in the cell membrane. In Gossypium hirsutum (Upland cotton), this protein is CASP-like protein F16 (F16).